We begin with the raw amino-acid sequence, 65 residues long: uncharacterized protein (65 aa).

This is an uncharacterized protein from Rickettsia conorii (strain ATCC VR-613 / Malish 7).